Consider the following 270-residue polypeptide: Phosphatidylglycerol--prolipoprotein diacylglyceryl transferase (270 aa).

Helical transmembrane passes span 19-39, 54-74, 92-112, and 116-136; these read FPVYWYGVIIGTGVLLGLWLA, IDLVLIAVPIAILFARMYYVI, QGGLAIHGGLIGAVITGILFA, and GLSFWKLADIAAPSILLGQAI. Residue R138 coordinates a 1,2-diacyl-sn-glycero-3-phospho-(1'-sn-glycerol). Transmembrane regions (helical) follow at residues 178-198, 206-226, and 236-256; these read HPTFLYESLWNFAGVILLLAL, GELFFTYLIWYSVGRFFVEGL, and LRIAQVMSIGIVVISIIFIIV.

This sequence belongs to the Lgt family.

It localises to the cell membrane. It catalyses the reaction L-cysteinyl-[prolipoprotein] + a 1,2-diacyl-sn-glycero-3-phospho-(1'-sn-glycerol) = an S-1,2-diacyl-sn-glyceryl-L-cysteinyl-[prolipoprotein] + sn-glycerol 1-phosphate + H(+). The protein operates within protein modification; lipoprotein biosynthesis (diacylglyceryl transfer). Its function is as follows. Catalyzes the transfer of the diacylglyceryl group from phosphatidylglycerol to the sulfhydryl group of the N-terminal cysteine of a prolipoprotein, the first step in the formation of mature lipoproteins. The protein is Phosphatidylglycerol--prolipoprotein diacylglyceryl transferase of Bacillus mycoides (strain KBAB4) (Bacillus weihenstephanensis).